Reading from the N-terminus, the 205-residue chain is Cytochrome c biogenesis ATP-binding export protein CcmA (205 aa).

One can recognise an ABC transporter domain in the interval 2-204 (LEVSNLTAIR…SPKLRKIKLG (203 aa)). 34 to 41 (GRNGTGKT) contacts ATP.

It belongs to the ABC transporter superfamily. CcmA exporter (TC 3.A.1.107) family. As to quaternary structure, the complex is composed of two ATP-binding proteins (CcmA) and two transmembrane proteins (CcmB).

It localises to the cell inner membrane. The catalysed reaction is heme b(in) + ATP + H2O = heme b(out) + ADP + phosphate + H(+). Its function is as follows. Part of the ABC transporter complex CcmAB involved in the biogenesis of c-type cytochromes; once thought to export heme, this seems not to be the case, but its exact role is uncertain. Responsible for energy coupling to the transport system. This Vibrio vulnificus (strain YJ016) protein is Cytochrome c biogenesis ATP-binding export protein CcmA.